The following is a 547-amino-acid chain: Chaperonin GroEL 1 (547 aa).

ATP contacts are provided by residues 30–33, Lys-51, 87–91, Gly-415, and Asp-496; these read TLGP and DGTTT.

Belongs to the chaperonin (HSP60) family. Forms a cylinder of 14 subunits composed of two heptameric rings stacked back-to-back. Interacts with the co-chaperonin GroES.

It is found in the cytoplasm. It catalyses the reaction ATP + H2O + a folded polypeptide = ADP + phosphate + an unfolded polypeptide.. In terms of biological role, together with its co-chaperonin GroES, plays an essential role in assisting protein folding. The GroEL-GroES system forms a nano-cage that allows encapsulation of the non-native substrate proteins and provides a physical environment optimized to promote and accelerate protein folding. The sequence is that of Chaperonin GroEL 1 from Bradyrhizobium sp. (strain BTAi1 / ATCC BAA-1182).